A 45-amino-acid chain; its full sequence is MTQIFLIGRLPEAYAPFDPIVDVLPIIPVLFLLLAFVWQASVSFR.

A propeptide spanning residues 1-8 (MTQIFLIG) is cleaved from the precursor. The chain crosses the membrane as a helical span at residues 20-40 (IVDVLPIIPVLFLLLAFVWQA).

It belongs to the PsbK family. In terms of assembly, PSII is composed of 1 copy each of membrane proteins PsbA, PsbB, PsbC, PsbD, PsbE, PsbF, PsbH, PsbI, PsbJ, PsbK, PsbL, PsbM, PsbT, PsbX, PsbY, PsbZ, Psb30/Ycf12, at least 3 peripheral proteins of the oxygen-evolving complex and a large number of cofactors. It forms dimeric complexes.

It localises to the plastid. It is found in the chloroplast thylakoid membrane. Functionally, one of the components of the core complex of photosystem II (PSII). PSII is a light-driven water:plastoquinone oxidoreductase that uses light energy to abstract electrons from H(2)O, generating O(2) and a proton gradient subsequently used for ATP formation. It consists of a core antenna complex that captures photons, and an electron transfer chain that converts photonic excitation into a charge separation. This chain is Photosystem II reaction center protein K, found in Ostreococcus tauri.